The chain runs to 289 residues: ATP synthase gamma chain (289 aa).

This sequence belongs to the ATPase gamma chain family. F-type ATPases have 2 components, CF(1) - the catalytic core - and CF(0) - the membrane proton channel. CF(1) has five subunits: alpha(3), beta(3), gamma(1), delta(1), epsilon(1). CF(0) has three main subunits: a, b and c.

The protein resides in the cell inner membrane. Functionally, produces ATP from ADP in the presence of a proton gradient across the membrane. The gamma chain is believed to be important in regulating ATPase activity and the flow of protons through the CF(0) complex. This Azobacteroides pseudotrichonymphae genomovar. CFP2 protein is ATP synthase gamma chain.